The primary structure comprises 110 residues: MSTSGPRAFSSRFASFIDKVRWSLLQQQKSNMDNMFESYINNLRDVDEAYMNKVELESRLEGLTDEINFLRQIHEEEIRSLDMDSIIAEVRHGDDLRRLALDIEIATYRK.

The segment at 1–12 (MSTSGPRAFSSR) is head. The IF rod domain maps to 1-110 (MSTSGPRAFS…LDIEIATYRK (110 aa)). Phosphoserine occurs at positions 2, 4, 10, and 11. Position 12 is an omega-N-methylarginine (Arg12). A coil 1A region spans residues 13-25 (FASFIDKVRWSLL). The segment at 26–39 (QQQKSNMDNMFESY) is linker 1. Residue Lys29 forms a Glycyl lysine isopeptide (Lys-Gly) (interchain with G-Cter in SUMO2) linkage. The tract at residues 40 to 79 (INNLRDVDEAYMNKVELESRLEGLTDEINFLRQIHEEEIR) is coil 1B. Position 53 is an N6-acetyllysine (Lys53). 2 positions are modified to phosphoserine: Ser80 and Ser85. The tract at residues 80-86 (SLDMDSI) is linker 12. The tract at residues 87–110 (IAEVRHGDDLRRLALDIEIATYRK) is coil 2. Residues 88–99 (AEVRHGDDLRRL) are necessary for interaction with PNN. A Glycyl lysine isopeptide (Lys-Gly) (interchain with G-Cter in SUMO2) cross-link involves residue Lys110.

It belongs to the intermediate filament family. In terms of assembly, heterotetramer of two type I and two type II keratins. Forms a heterodimer with KRT18. Associates with KRT20. Interacts with PNN. When associated with KRT19, interacts with DMD. Interacts with TCHP. Interacts with APEX1. Interacts with GPER1. Interacts with EPPK1. Interacts with PKP1 and PKP2. Post-translationally, O-glycosylated. O-GlcNAcylation at multiple sites increases solubility, and decreases stability by inducing proteasomal degradation. In terms of processing, O-glycosylated (O-GlcNAcylated), in a cell cycle-dependent manner.

The protein localises to the cytoplasm. It localises to the nucleus. It is found in the nucleoplasm. Its subcellular location is the nucleus matrix. Its function is as follows. Together with KRT19, helps to link the contractile apparatus to dystrophin at the costameres of striated muscle. This chain is Keratin, type II cytoskeletal 8, found in Mesocricetus auratus (Golden hamster).